Reading from the N-terminus, the 815-residue chain is Leucine--tRNA ligase (815 aa).

Positions 42–52 (PYPSGRLHMGH) match the 'HIGH' region motif. A 'KMSKS' region motif is present at residues 571 to 575 (KMSKS). Lys574 serves as a coordination point for ATP.

This sequence belongs to the class-I aminoacyl-tRNA synthetase family.

It localises to the cytoplasm. The catalysed reaction is tRNA(Leu) + L-leucine + ATP = L-leucyl-tRNA(Leu) + AMP + diphosphate. The protein is Leucine--tRNA ligase of Vesicomyosocius okutanii subsp. Calyptogena okutanii (strain HA).